The primary structure comprises 1505 residues: Probable RNA-directed RNA polymerase (1505 aa).

The protein belongs to the totiviridae RNA-directed RNA polymerase family.

It carries out the reaction RNA(n) + a ribonucleoside 5'-triphosphate = RNA(n+1) + diphosphate. RNA-dependent RNA polymerase which replicates the viral genome. Catalyzes the transcription of fully conservative plus-strand genomic RNAs that are extruded from the virion into the cytoplasm where they function as mRNAs for translation of viral proteins and also as substrates for encapsidation to form new virions. Once encapsidated, the positive strand is converted to dsRNA by the RNA-directed RNA polymerase. Displays ssRNA-binding activity. This is Probable RNA-directed RNA polymerase (gag-pol) from Saccharomyces cerevisiae virus L-A (ScV-L-A).